The primary structure comprises 454 residues: CBL-interacting protein kinase 4 (454 aa).

The Protein kinase domain occupies 25 to 284 (YELGRMLGRG…ESLAAHHPWF (260 aa)). ATP contacts are provided by residues 31–39 (LGRGTFAKV) and Lys-54. The active-site Proton acceptor is the Asp-151. Residues 169–198 (DFGLAALPDTLRDDGRLHTACGTPAYAAPE) form an activation loop region. The NAF domain occupies 311–335 (APPPPLNAFDIISMSPGLDLSGLFG). A PPI region spans residues 341 to 370 (LREKRFTTTASPEKTLEQLGLAGGKLGYVV).

It belongs to the protein kinase superfamily. CAMK Ser/Thr protein kinase family. SNF1 subfamily. It depends on Mn(2+) as a cofactor.

It carries out the reaction L-seryl-[protein] + ATP = O-phospho-L-seryl-[protein] + ADP + H(+). The catalysed reaction is L-threonyl-[protein] + ATP = O-phospho-L-threonyl-[protein] + ADP + H(+). CIPK serine-threonine protein kinases interact with CBL proteins. Binding of a CBL protein to the regulatory NAF domain of CIPK protein lead to the activation of the kinase in a calcium-dependent manner. This is CBL-interacting protein kinase 4 (CIPK4) from Oryza sativa subsp. japonica (Rice).